Here is a 304-residue protein sequence, read N- to C-terminus: NuA3 HAT complex component PDP3 (304 aa).

The 62-residue stretch at 7 to 68 (TGDLVLCKVG…PSRLKELDQD (62 aa)) folds into the PWWP domain. The tract at residues 145–195 (KKNSISIKEDPEDNQKSNEEESKPNIKPSKKKRPTANSGGKSNSGNKKKVK) is disordered. Residues 151-168 (IKEDPEDNQKSNEEESKP) are compositionally biased toward basic and acidic residues.

In terms of assembly, component of the NuA3 histone acetyltransferase (HAT) complex. The NuA3 HAT complex has 2 functionally distinct forms that participate in transcription. The NuA3a HAT complex is composed of at least NTO1, SAS3, TAF14, YNG1 and EAF6. The NuA3b HAT complex contains an additional subunit, PDP3.

It localises to the nucleus. The protein localises to the cytoplasm. In terms of biological role, histone-binding component of the NuA3b histone acetyltransferase complex. Targets the NuA3b HAT complex via histone H3K36me3 to the coding regions of actively transcribed genes to coordinate transcription elongation. Stimulates elongation by RNA polymerase II in vitro. This chain is NuA3 HAT complex component PDP3, found in Saccharomyces cerevisiae (strain ATCC 204508 / S288c) (Baker's yeast).